A 99-amino-acid chain; its full sequence is Evasin P1162 (99 aa).

The N-terminal stretch at 1–28 (MEVKTFAFLQIAVCIAIGIELICAGTNA) is a signal peptide. 3 disulfide bridges follow: Cys-40/Cys-59, Cys-44/Cys-61, and Cys-55/Cys-72. 4 N-linked (GlcNAc...) asparagine glycosylation sites follow: Asn-43, Asn-49, Asn-58, and Asn-85.

The protein localises to the secreted. Salivary chemokine-binding protein which binds to host chemokines CXCL1, CXCL2, CXCL3, CXCL5 and CXCL8. The polypeptide is Evasin P1162 (Ixodes ricinus (Common tick)).